Reading from the N-terminus, the 429-residue chain is Enolase (429 aa).

Position 162 (glutamine 162) interacts with (2R)-2-phosphoglycerate. Glutamate 204 serves as the catalytic Proton donor. 3 residues coordinate Mg(2+): aspartate 241, glutamate 283, and aspartate 310. Residues lysine 335, arginine 364, serine 365, and lysine 386 each contribute to the (2R)-2-phosphoglycerate site. Residue lysine 335 is the Proton acceptor of the active site.

It belongs to the enolase family. Mg(2+) serves as cofactor.

The protein resides in the cytoplasm. Its subcellular location is the secreted. It is found in the cell surface. The enzyme catalyses (2R)-2-phosphoglycerate = phosphoenolpyruvate + H2O. The protein operates within carbohydrate degradation; glycolysis; pyruvate from D-glyceraldehyde 3-phosphate: step 4/5. In terms of biological role, catalyzes the reversible conversion of 2-phosphoglycerate (2-PG) into phosphoenolpyruvate (PEP). It is essential for the degradation of carbohydrates via glycolysis. The protein is Enolase of Mycolicibacterium vanbaalenii (strain DSM 7251 / JCM 13017 / BCRC 16820 / KCTC 9966 / NRRL B-24157 / PYR-1) (Mycobacterium vanbaalenii).